Here is a 785-residue protein sequence, read N- to C-terminus: Probably inactive leucine-rich repeat receptor-like protein kinase At5g58150 (785 aa).

The N-terminal stretch at 1–21 is a signal peptide; the sequence is MRLSLWGSLLFFSFFVKHLTS. Residues 22-436 are Extracellular-facing; sequence LDPNTDAYHL…KVNKKNTGLK (415 aa). 14 LRR repeats span residues 64-88, 89-112, 114-136, 138-160, 161-184, 186-208, 210-232, 236-258, 259-283, 284-306, 307-330, 331-355, 357-377, and 379-405; these read SENV…TIGK, MSKL…LWSL, LLES…IGNF, SLHT…ISNL, VNLT…LVHC, SLLS…FGSA, PLLK…VLHE, TVDL…HKHN, WSSL…LSSA, HKLG…EIGK, LSAL…EISR, LSHL…SVKN, EVLD…LLEK, and AMMQ…TIQR. Asn119 carries an N-linked (GlcNAc...) asparagine glycan. Residues Asn162, Asn198, Asn216, and Asn258 are each glycosylated (N-linked (GlcNAc...) asparagine). Residues Asn314, Asn319, and Asn343 are each glycosylated (N-linked (GlcNAc...) asparagine). Residues Asn385, Asn390, and Asn397 are each glycosylated (N-linked (GlcNAc...) asparagine). Residues 437–457 form a helical membrane-spanning segment; that stretch reads IGLGLAISMAFLLIGLLLILV. Residues 458 to 785 lie on the Cytoplasmic side of the membrane; the sequence is ALRVRRKSRT…GLLKDISPNY (328 aa). Phosphothreonine is present on residues Thr510 and Thr518. One can recognise a Protein kinase domain in the interval 521–785; it reads FDRGTMLWEG…GLLKDISPNY (265 aa). ATP is bound by residues 527 to 535 and Lys549; that span reads LWEGKSGPT. Phosphotyrosine occurs at positions 594 and 683.

It belongs to the protein kinase superfamily. Ser/Thr protein kinase family.

It localises to the cell membrane. This is Probably inactive leucine-rich repeat receptor-like protein kinase At5g58150 from Arabidopsis thaliana (Mouse-ear cress).